Consider the following 168-residue polypeptide: Transcriptional regulator MraZ (168 aa).

2 SpoVT-AbrB domains span residues Glu-8 to Arg-51 and Ala-90 to Thr-140.

This sequence belongs to the MraZ family. In terms of assembly, forms oligomers.

The protein resides in the cytoplasm. It is found in the nucleoid. The protein is Transcriptional regulator MraZ of Cereibacter sphaeroides (strain ATCC 17025 / ATH 2.4.3) (Rhodobacter sphaeroides).